The primary structure comprises 209 residues: Small ribosomal subunit protein uS3 (209 aa).

The region spanning 17–86 (IDEFLEKELR…NPQIEVEEIK (70 aa)) is the KH type-2 domain.

The protein belongs to the universal ribosomal protein uS3 family. As to quaternary structure, part of the 30S ribosomal subunit.

Binds the lower part of the 30S subunit head. In Thermococcus kodakarensis (strain ATCC BAA-918 / JCM 12380 / KOD1) (Pyrococcus kodakaraensis (strain KOD1)), this protein is Small ribosomal subunit protein uS3.